Consider the following 202-residue polypeptide: MSRYRGPRLRIVRRLGDLPGLTRKAARRSYPPGQHGQARRKRSEYAIRLEEKQKLRFNYGLSERQLVRYVKKARRMQGSTGTNLLQLLEMRLDNLVFRLGFAPTIPGARQLVNHGHVTVNGRVVDIASYNCRPGEVIGVRQREASRKLVTANLEYPGLANVPVHLDFDKNKLEAKVTGACEREWVALQINELLVVEYYSRKV.

The tract at residues 23–42 (RKAARRSYPPGQHGQARRKR) is disordered. The region spanning 90-154 (MRLDNLVFRL…SRKLVTANLE (65 aa)) is the S4 RNA-binding domain.

Belongs to the universal ribosomal protein uS4 family. Part of the 30S ribosomal subunit. Contacts protein S5. The interaction surface between S4 and S5 is involved in control of translational fidelity.

Functionally, one of the primary rRNA binding proteins, it binds directly to 16S rRNA where it nucleates assembly of the body of the 30S subunit. Its function is as follows. With S5 and S12 plays an important role in translational accuracy. This is Small ribosomal subunit protein uS4 from Synechococcus elongatus (strain ATCC 33912 / PCC 7942 / FACHB-805) (Anacystis nidulans R2).